Here is a 349-residue protein sequence, read N- to C-terminus: MNFNNFTSDLNGKTCVKCEKEAKFTGVDPKKAWYCQECFIQMVRNKFRSALSKKKIYKEADARDTLVVYDGSPSGTFLLNQIDDALKQITYKRLMVKPTVLVLVSESEEPEIQQVIKRVAEIKKNFLENVNWFIAHIAFCLYDEPSELKEFECNGIEKITAYKYLLASCSVPTYKKELERMLKEKCLQKLAESLKVTKCMVTDDADDLGRLALDQLCLGRGGSLSSLVTVAEKRNDFMIIRPLCDLSKREISIYNYLCKIDDHYIQFSHTQSQEKSVQTLTDAFIRTLEDEKFYSTINTVLSTASKIHNTNGKDGSRCSMCYVEVAEFQCETCSAVRNSCSENLNIIFS.

It belongs to the CTU2/NCS2 family.

It is found in the cytoplasm. Its pathway is tRNA modification; 5-methoxycarbonylmethyl-2-thiouridine-tRNA biosynthesis. Its function is as follows. Plays a central role in 2-thiolation of mcm(5)S(2)U at tRNA wobble positions of tRNA(Lys), tRNA(Glu) and tRNA(Gln). May act by forming a heterodimer with tut-1/ctu-1 that ligates sulfur from thiocarboxylated urm-1 onto the uridine of tRNAs at wobble position. This is Cytoplasmic tRNA 2-thiolation protein 2 from Caenorhabditis briggsae.